Reading from the N-terminus, the 545-residue chain is Hydroxylamine reductase (545 aa).

[4Fe-4S] cluster is bound by residues C7, C10, C19, and C25. Residues H241, E265, C309, C400, C428, C453, E488, and K490 each contribute to the hybrid [4Fe-2O-2S] cluster site. C400 carries the post-translational modification Cysteine persulfide; in oxidized form.

Belongs to the HCP family. In terms of assembly, monomer. [4Fe-4S] cluster is required as a cofactor. It depends on hybrid [4Fe-2O-2S] cluster as a cofactor.

It localises to the cytoplasm. The enzyme catalyses A + NH4(+) + H2O = hydroxylamine + AH2 + H(+). Catalyzes the reduction of hydroxylamine to form NH(3) and H(2)O. In Desulfovibrio desulfuricans (strain ATCC 27774 / DSM 6949 / MB), this protein is Hydroxylamine reductase.